A 1619-amino-acid polypeptide reads, in one-letter code: Rap-GAP domain-containing protein DDB_G0281809 (1619 aa).

4 disordered regions span residues 128 to 249, 289 to 316, 907 to 974, and 1134 to 1153; these read SMSN…TTPI, QQQQQQSPSITTGTVKGSKYRESVMPGS, SIGG…PYIN, and ISNNNTTTTSNNSIKSTSNN. Composition is skewed to low complexity over residues 130–204 and 231–249; these read SNNN…SLSL and QISATTTAATSPTTPTTPI. Residues 265–295 are a coiled coil; it reads FNEVVQQQQQQQQQQQQQQQQQQQQQQQQQS. 2 stretches are compositionally biased toward low complexity: residues 916 to 926 and 934 to 965; these read SGNSSQPSSTG and SGSKSNSSSSSSSQPSSTGGSGNNSNSANGGS. The Rap-GAP domain occupies 1273 to 1494; the sequence is LNMLDSVSER…TNRKKLISDI (222 aa). The tract at residues 1554-1619 is disordered; the sequence is IGTFTLPPPP…LSQSEDQSHK (66 aa). A compositionally biased stretch (pro residues) spans 1559-1573; sequence LPPPPISPTISPQPS. Over residues 1574–1590 the composition is skewed to low complexity; that stretch reads PHLSSSGGSWASSKGGS. Positions 1591-1619 are enriched in polar residues; that stretch reads TQPTTPSGRTSNFLSRRPNLSQSEDQSHK.

The sequence is that of Rap-GAP domain-containing protein DDB_G0281809 from Dictyostelium discoideum (Social amoeba).